We begin with the raw amino-acid sequence, 546 residues long: Probable malate:quinone oxidoreductase (546 aa).

This sequence belongs to the MQO family. The cofactor is FAD.

The catalysed reaction is (S)-malate + a quinone = a quinol + oxaloacetate. The protein operates within carbohydrate metabolism; tricarboxylic acid cycle; oxaloacetate from (S)-malate (quinone route): step 1/1. This chain is Probable malate:quinone oxidoreductase, found in Acinetobacter baumannii (strain ACICU).